A 92-amino-acid chain; its full sequence is UPF0223 protein SSP1692 (92 aa).

This sequence belongs to the UPF0223 family.

The polypeptide is UPF0223 protein SSP1692 (Staphylococcus saprophyticus subsp. saprophyticus (strain ATCC 15305 / DSM 20229 / NCIMB 8711 / NCTC 7292 / S-41)).